We begin with the raw amino-acid sequence, 195 residues long: Orotate phosphoribosyltransferase (195 aa).

117–125 (EDITTTGGS) provides a ligand contact to 5-phospho-alpha-D-ribose 1-diphosphate. Residues threonine 121 and arginine 149 each coordinate orotate.

It belongs to the purine/pyrimidine phosphoribosyltransferase family. PyrE subfamily. In terms of assembly, homodimer. It depends on Mg(2+) as a cofactor.

The enzyme catalyses orotidine 5'-phosphate + diphosphate = orotate + 5-phospho-alpha-D-ribose 1-diphosphate. Its pathway is pyrimidine metabolism; UMP biosynthesis via de novo pathway; UMP from orotate: step 1/2. Its function is as follows. Catalyzes the transfer of a ribosyl phosphate group from 5-phosphoribose 1-diphosphate to orotate, leading to the formation of orotidine monophosphate (OMP). The chain is Orotate phosphoribosyltransferase from Acidithiobacillus ferrooxidans (strain ATCC 53993 / BNL-5-31) (Leptospirillum ferrooxidans (ATCC 53993)).